The primary structure comprises 433 residues: Type I acyl-CoA thioesterase mpaH (433 aa).

The tract at residues 58-246 is abhydrolase domain; it reads HGVGLPKELY…VKARFDAAAD (189 aa). Val-60 is a binding site for substrate. The active-site Nucleophile is the Ser-139. Residue Phe-140 coordinates substrate. Active-site residues include Asp-163 and His-365.

Belongs to the AB hydrolase superfamily. MpaH hydrolase family. In terms of assembly, homodimer.

It localises to the peroxisome matrix. It catalyses the reaction mycophenolyl-CoA + H2O = mycophenolate + CoA + H(+). It functions in the pathway secondary metabolite biosynthesis; terpenoid biosynthesis. In terms of biological role, type I acyl-CoA thioesterase; part of the gene cluster that mediates the biosynthesis of mycophenolic acid (MPA), the first isolated antibiotic natural product in the world obtained from a culture of Penicillium brevicompactum in 1893. MpaH acts as a peroxisomal acyl-CoA hydrolase that converts MPA-CoA into the final product MPA. The first step of the pathway is the synthesis of 5-methylorsellinic acid (5MOA) by the cytosolic polyketide synthase mpaC. 5MOA is then converted to the phthalide compound 5,7-dihydroxy-4,6-dimethylphthalide (DHMP) by the endoplasmic reticulum-bound cytochrome P450 monooxygenase mpaDE. MpaDE first catalyzes hydroxylation of 5-MOA to 4,6-dihydroxy-2-(hydroxymethyl)-3-methylbenzoic acid (DHMB). MpaDE then acts as a lactone synthase that catalyzes the ring closure to convert DHMB into DHMP. The next step is the prenylation of DHMP by the Golgi apparatus-associated prenyltransferase mpaA to yield farnesyl-DHMP (FDHMP). The ER-bound oxygenase mpaB then mediates the oxidative cleavage the C19-C20 double bond in FDHMP to yield FDHMP-3C via a mycophenolic aldehyde intermediate. The O-methyltransferase mpaG catalyzes the methylation of FDHMP-3C to yield MFDHMP-3C. After the cytosolic methylation of FDHMP-3C, MFDHMP-3C enters into peroxisomes probably via free diffusion due to its low molecular weight. Upon a peroxisomal CoA ligation reaction, catalyzed by a beta-oxidation component enzyme acyl-CoA ligase ACL891, MFDHMP-3C-CoA would then be restricted to peroxisomes for the following beta-oxidation pathway steps. The peroxisomal beta-oxidation machinery than converts MFDHMP-3C-CoA into MPA_CoA, via a beta-oxidation chain-shortening process. Finally mpaH acts as a peroxisomal acyl-CoA hydrolase with high substrate specificity toward MPA-CoA to release the final product MPA. The chain is Type I acyl-CoA thioesterase mpaH from Penicillium roqueforti (strain FM164).